Here is a 269-residue protein sequence, read N- to C-terminus: Serine/threonine-protein kinase ZRK7 (269 aa).

The region spanning 80–269 is the Protein kinase domain; it reads FDWSYAIGVD…KNRLMVTVIT (190 aa). ATP contacts are provided by residues 86–94 and lysine 106; that span reads IGVDRFVWY. Aspartate 205 acts as the Proton acceptor in catalysis.

This sequence belongs to the protein kinase superfamily. Ser/Thr protein kinase family. ZRK subfamily.

The enzyme catalyses L-seryl-[protein] + ATP = O-phospho-L-seryl-[protein] + ADP + H(+). It catalyses the reaction L-threonyl-[protein] + ATP = O-phospho-L-threonyl-[protein] + ADP + H(+). This is Serine/threonine-protein kinase ZRK7 from Arabidopsis thaliana (Mouse-ear cress).